Reading from the N-terminus, the 306-residue chain is MKQQPLLGFTFALITAMAWGSLPIALKQVLSVMNAQTIVWYRFIIAAVSLLALLAYKKQLPELMKVRQYAWIMLIGVIGLTSNFLLFSSSLNYIEPSVAQIFIHLSSFGMLICGVLIFKEKLGLHQKIGLFLLLIGLGLFFNDRFDAFAGLNQYSTGVILGVGGALIWVAYGMAQKLMLRKFNSQQILLMMYLGCAIAFMPMADFSQVQELTPLALICFIYCCLNTLIGYGSYAEALNRWDVSKVSVVITLVPLFTILFSHIAHYFSPADFAAPELNNISYIGAFVVVCGAILSAIGHKLLPHKNH.

A run of 10 helical transmembrane segments spans residues 6-26 (LLGFTFALITAMAWGSLPIAL), 35-55 (AQTIVWYRFIIAAVSLLALLA), 69-89 (YAWIMLIGVIGLTSNFLLFSS), 98-118 (VAQIFIHLSSFGMLICGVLIF), 122-142 (LGLHQKIGLFLLLIGLGLFFN), 154-174 (YSTGVILGVGGALIWVAYGMA), 186-206 (QILLMMYLGCAIAFMPMADFS), 211-231 (LTPLALICFIYCCLNTLIGYG), 247-267 (VVITLVPLFTILFSHIAHYFS), and 281-301 (YIGAFVVVCGAILSAIGHKLL). EamA domains lie at 17 to 142 (MAWG…LFFN) and 166 to 296 (LIWV…LSAI).

Belongs to the EamA transporter family.

The protein localises to the cell membrane. This is an uncharacterized protein from Haemophilus influenzae (strain ATCC 51907 / DSM 11121 / KW20 / Rd).